Reading from the N-terminus, the 538-residue chain is Ribulokinase 1 (538 aa).

Belongs to the ribulokinase family.

It catalyses the reaction D-ribulose + ATP = D-ribulose 5-phosphate + ADP + H(+). The enzyme catalyses L-ribulose + ATP = L-ribulose 5-phosphate + ADP + H(+). The protein operates within carbohydrate degradation; L-arabinose degradation via L-ribulose; D-xylulose 5-phosphate from L-arabinose (bacterial route): step 2/3. The protein is Ribulokinase 1 of Staphylococcus saprophyticus subsp. saprophyticus (strain ATCC 15305 / DSM 20229 / NCIMB 8711 / NCTC 7292 / S-41).